Reading from the N-terminus, the 442-residue chain is Histidinol dehydrogenase (442 aa).

Tyrosine 136, glutamine 197, and asparagine 220 together coordinate NAD(+). 3 residues coordinate substrate: serine 243, glutamine 265, and histidine 268. 2 residues coordinate Zn(2+): glutamine 265 and histidine 268. Active-site proton acceptor residues include glutamate 333 and histidine 334. The substrate site is built by histidine 334, aspartate 367, glutamate 421, and histidine 426. Aspartate 367 serves as a coordination point for Zn(2+). Position 426 (histidine 426) interacts with Zn(2+).

Belongs to the histidinol dehydrogenase family. Requires Zn(2+) as cofactor.

It catalyses the reaction L-histidinol + 2 NAD(+) + H2O = L-histidine + 2 NADH + 3 H(+). The protein operates within amino-acid biosynthesis; L-histidine biosynthesis; L-histidine from 5-phospho-alpha-D-ribose 1-diphosphate: step 9/9. Its function is as follows. Catalyzes the sequential NAD-dependent oxidations of L-histidinol to L-histidinaldehyde and then to L-histidine. This is Histidinol dehydrogenase from Pseudomonas fluorescens (strain ATCC BAA-477 / NRRL B-23932 / Pf-5).